The sequence spans 637 residues: Chaperone protein HtpG (637 aa).

An a; substrate-binding region spans residues 1-345 (MSQQETHGFQ…SNDLPLNVSR (345 aa)). A b region spans residues 346–562 (EILQDNHITK…EGEMSSQMIK (217 aa)). Residues 563 to 637 (LMQAAGQPVP…MNQMLLANLK (75 aa)) form a c region.

Belongs to the heat shock protein 90 family. In terms of assembly, homodimer.

It is found in the cytoplasm. In terms of biological role, molecular chaperone. Has ATPase activity. In Shewanella sp. (strain MR-4), this protein is Chaperone protein HtpG.